The following is a 260-amino-acid chain: Hydroxyethylthiazole kinase 1 (260 aa).

M39 contacts substrate. Positions 115 and 160 each coordinate ATP. Residue G187 participates in substrate binding.

It belongs to the Thz kinase family. Mg(2+) is required as a cofactor.

The catalysed reaction is 5-(2-hydroxyethyl)-4-methylthiazole + ATP = 4-methyl-5-(2-phosphooxyethyl)-thiazole + ADP + H(+). It participates in cofactor biosynthesis; thiamine diphosphate biosynthesis; 4-methyl-5-(2-phosphoethyl)-thiazole from 5-(2-hydroxyethyl)-4-methylthiazole: step 1/1. Functionally, catalyzes the phosphorylation of the hydroxyl group of 4-methyl-5-beta-hydroxyethylthiazole (THZ). This is Hydroxyethylthiazole kinase 1 from Streptococcus pneumoniae (strain 70585).